The following is a 393-amino-acid chain: Asparagine--oxo-acid transaminase (393 aa).

The L-asparagine site is built by G39, W126, and N176. At K239 the chain carries N6-(pyridoxal phosphate)lysine. R370 serves as a coordination point for L-asparagine.

It belongs to the class-I pyridoxal-phosphate-dependent aminotransferase family. Pyridoxal 5'-phosphate is required as a cofactor.

The enzyme catalyses a 2-oxocarboxylate + L-asparagine = 2-oxosuccinamate + an L-alpha-amino acid. It carries out the reaction L-asparagine + 2-oxoglutarate = 2-oxosuccinamate + L-glutamate. Its function is as follows. Catalyzes the transamination reaction between L-asparagine and 2-oxoglutarate to produce L-glutamate and 2-oxosuccinamate. Is not active with pyruvate as amine acceptor. May also use other amino acids as substrates. The polypeptide is Asparagine--oxo-acid transaminase (Streptococcus mutans serotype c (strain ATCC 700610 / UA159)).